The following is a 1371-amino-acid chain: DNA-directed RNA polymerase subunit beta (1371 aa).

The protein belongs to the RNA polymerase beta chain family. The RNAP catalytic core consists of 2 alpha, 1 beta, 1 beta' and 1 omega subunit. When a sigma factor is associated with the core the holoenzyme is formed, which can initiate transcription.

The enzyme catalyses RNA(n) + a ribonucleoside 5'-triphosphate = RNA(n+1) + diphosphate. Its function is as follows. DNA-dependent RNA polymerase catalyzes the transcription of DNA into RNA using the four ribonucleoside triphosphates as substrates. This is DNA-directed RNA polymerase subunit beta from Citrifermentans bemidjiense (strain ATCC BAA-1014 / DSM 16622 / JCM 12645 / Bem) (Geobacter bemidjiensis).